Consider the following 125-residue polypeptide: Large ribosomal subunit protein bL12 (125 aa).

The protein belongs to the bacterial ribosomal protein bL12 family. Homodimer. Part of the ribosomal stalk of the 50S ribosomal subunit. Forms a multimeric L10(L12)X complex, where L10 forms an elongated spine to which 2 to 4 L12 dimers bind in a sequential fashion. Binds GTP-bound translation factors.

In terms of biological role, forms part of the ribosomal stalk which helps the ribosome interact with GTP-bound translation factors. Is thus essential for accurate translation. The polypeptide is Large ribosomal subunit protein bL12 (Hyphomonas neptunium (strain ATCC 15444)).